A 2507-amino-acid polypeptide reads, in one-letter code: Highly reducing polyketide synthase lcsB (2507 aa).

In terms of domain architecture, Ketosynthase family 3 (KS3) spans Ala-2–Ser-393. Residues Asn-399–Glu-501 form a disordered region. Composition is skewed to polar residues over residues Ser-405–Pro-414 and Asn-470–Thr-488. Residues Trp-581–Lys-900 form a malonyl-CoA:ACP transacylase (MAT) domain region. Positions His-953–Ala-1080 are N-terminal hotdog fold. The segment at His-953–Asp-1232 is dehydratase (DH) domain. The PKS/mFAS DH domain maps to His-953–Glu-1234. His-984 functions as the Proton acceptor; for dehydratase activity in the catalytic mechanism. Residues Ala-1092 to Glu-1234 form a C-terminal hotdog fold region. Asp-1151 serves as the catalytic Proton donor; for dehydratase activity. The interval Leu-1402–Pro-1570 is methyltransferase (CMet) domain. The segment at Gly-1793 to Val-2105 is enoyl reductase (ER) (ER) domain. The tract at residues Ser-2130 to Gly-2303 is ketoreductase (KR) domain. The Carrier domain occupies Glu-2425 to Leu-2503. Ser-2463 is modified (O-(pantetheine 4'-phosphoryl)serine).

It participates in secondary metabolite biosynthesis. Highly reducing polyketide synthase; part of the gene cluster that mediates the biosynthesis of the lipopeptide antibiotics leucinostatins that show extensive biological activities, including antimalarial, antiviral, antibacterial, antifungal, and antitumor activities, as well as phytotoxic. Leucinostatin A contains nine amino acid residues, including the unusual amino acid 4-methyl-L-proline (MePro), 2-amino-6-hydroxy-4-methyl-8-oxodecanoic acid (AHyMeOA), 3-hydroxyleucine (HyLeu), alpha-aminoisobutyric acid (AIB), beta-Ala, a 4-methylhex-2-enoic acid at the N-terminus as well as a N1,N1-dimethylpropane-1,2-diamine (DPD) at the C-terminus. The biosynthesis of leucinostatins is probably initiated with the assembly of 4-methylhex-2-enoic acid by a reducing PKS. Two reducing polyketide synthases, lcsB and lcsC, have been identified in the cluster and it is not clear which is the one that assembles 4-methylhex-2-enoic acid since both contain KS, AT, DH, cMT, ER, KR and ACP domains. The polyketide residue might be transferred to the NRPS lcsA, mediated by two additional enzymes, the acyl-CoA ligase lcsD and the thioesterase lcsE. The linear polyketide carboxylic acid, which is released from PKS, is converted to a CoA thioester by lcsD, and then lcsE hydrolyzes the thiol bond and shuttles the polyketide intermediate to lcsA. The C domain of the first module catalyzed the condensation of 4-methylhex-2-enoic acid and MePro carried by domain A1, followed by successive condensations of nine amino acids to trigger the elongation of the linear peptide. A5 and A6 domains of lcsA are proposed to incorporate leucine, A2 AHyMeOA, and A3 incorporates HyLeu. A4, A7 and A8 incorporate AIB. The AHyMeOA in leucinostatin A activated by the A2 might be produced by the second PKS (lcsB or lcsC) present within the cluster. The MePro is probably produced via leucine cyclization and may originate from a separate pathway, independent of the cluster. Another nonproteinogenic amino acid, beta-Ala, could be produced by an aspartic acid decarboxylase also localized outside of the cluster. Two candidates are VFPBJ_01400 and VFPBJ_10476. The final peptide scaffold may be released by the NAD(P)H-dependent thioester reductase (TE) at the C-terminal region of lcsA. Transamination of the lcsA product by the transaminase lcsP may produce DPD at the C-terminus. Further hydroxylation steps performed alternatively by the cytochrome P450 monooxygenases lcsI, lcsK andr lcsN then yield the non-methylated leucinostatins precursor. It is also possible that leucines can be hydroxylated prior to their incorporation into the peptide. Varying extents of methylation then lead to the formation of leucinostatins A and B. In Purpureocillium lilacinum (Paecilomyces lilacinus), this protein is Highly reducing polyketide synthase lcsB.